Here is a 356-residue protein sequence, read N- to C-terminus: 1-deoxy-D-xylulose 5-phosphate reductoisomerase (356 aa).

Residues Thr-7, Gly-8, Ser-9, Ile-10, Gly-31, Asn-33, and Asn-111 each contribute to the NADPH site. Lys-112 provides a ligand contact to 1-deoxy-D-xylulose 5-phosphate. Glu-113 lines the NADPH pocket. Asp-131 contacts Mn(2+). Residues Ser-132, Glu-133, Ser-155, and His-178 each coordinate 1-deoxy-D-xylulose 5-phosphate. Residue Glu-133 coordinates Mn(2+). Gly-184 serves as a coordination point for NADPH. Ser-191, Asn-196, Lys-197, and Glu-200 together coordinate 1-deoxy-D-xylulose 5-phosphate. Residue Glu-200 coordinates Mn(2+).

Belongs to the DXR family. The cofactor is Mg(2+). Requires Mn(2+) as cofactor.

The catalysed reaction is 2-C-methyl-D-erythritol 4-phosphate + NADP(+) = 1-deoxy-D-xylulose 5-phosphate + NADPH + H(+). The protein operates within isoprenoid biosynthesis; isopentenyl diphosphate biosynthesis via DXP pathway; isopentenyl diphosphate from 1-deoxy-D-xylulose 5-phosphate: step 1/6. Functionally, catalyzes the NADPH-dependent rearrangement and reduction of 1-deoxy-D-xylulose-5-phosphate (DXP) to 2-C-methyl-D-erythritol 4-phosphate (MEP). This chain is 1-deoxy-D-xylulose 5-phosphate reductoisomerase, found in Campylobacter jejuni (strain RM1221).